A 298-amino-acid polypeptide reads, in one-letter code: Elongation factor Ts (298 aa).

Residues 79–82 (TDFV) form an involved in Mg(2+) ion dislocation from EF-Tu region.

This sequence belongs to the EF-Ts family.

Its subcellular location is the cytoplasm. In terms of biological role, associates with the EF-Tu.GDP complex and induces the exchange of GDP to GTP. It remains bound to the aminoacyl-tRNA.EF-Tu.GTP complex up to the GTP hydrolysis stage on the ribosome. This chain is Elongation factor Ts, found in Cereibacter sphaeroides (strain ATCC 17025 / ATH 2.4.3) (Rhodobacter sphaeroides).